A 265-amino-acid chain; its full sequence is Hydroxyethylthiazole kinase (265 aa).

Substrate is bound at residue Met44. ATP-binding residues include Lys120 and Thr166. A substrate-binding site is contributed by Gly193.

This sequence belongs to the Thz kinase family. It depends on Mg(2+) as a cofactor.

The catalysed reaction is 5-(2-hydroxyethyl)-4-methylthiazole + ATP = 4-methyl-5-(2-phosphooxyethyl)-thiazole + ADP + H(+). The protein operates within cofactor biosynthesis; thiamine diphosphate biosynthesis; 4-methyl-5-(2-phosphoethyl)-thiazole from 5-(2-hydroxyethyl)-4-methylthiazole: step 1/1. Catalyzes the phosphorylation of the hydroxyl group of 4-methyl-5-beta-hydroxyethylthiazole (THZ). The polypeptide is Hydroxyethylthiazole kinase (Clostridium novyi (strain NT)).